Reading from the N-terminus, the 188-residue chain is Guanylate kinase (188 aa).

The 182-residue stretch at 2-183 (TKLIIISAPS…CVEQIRKAIA (182 aa)) folds into the Guanylate kinase-like domain. Residue 9-16 (APSGTGKS) participates in ATP binding.

This sequence belongs to the guanylate kinase family.

The protein localises to the cytoplasm. The enzyme catalyses GMP + ATP = GDP + ADP. In terms of biological role, essential for recycling GMP and indirectly, cGMP. The chain is Guanylate kinase from Porphyromonas gingivalis (strain ATCC BAA-308 / W83).